We begin with the raw amino-acid sequence, 353 residues long: Transcription factor MafA (353 aa).

Residue Ser14 is modified to Phosphoserine. Residue Lys32 forms a Glycyl lysine isopeptide (Lys-Gly) (interchain with G-Cter in SUMO2) linkage. Disordered regions lie at residues 40 to 108 and 177 to 219; these read RFCH…GGTS and ADDM…GAGH. Residues 46-73 are compositionally biased toward low complexity; sequence PPGSLSSTPLSTPCSSVPSSPSFCAPSP. The residue at position 49 (Ser49) is a Phosphoserine. Phosphothreonine is present on residues Thr53 and Thr57. A phosphoserine mark is found at Ser61 and Ser65. Over residues 74–93 the composition is skewed to gly residues; that stretch reads GTGGGGGAGGGGGSSQAGGA. The span at 183-210 shows a compositional bias: basic residues; sequence GHHHGAHHAAHHHHAAHHHHHHHHHHGG. Positions 254 to 279 are basic motif; sequence RLKQKRRTLKNRGYAQSCRFKRVQQR. Positions 254–317 constitute a bZIP domain; sequence RLKQKRRTLK…DLYKEKYEKL (64 aa). The interval 282 to 303 is leucine-zipper; the sequence is LESEKCQLQSQVEQLKLEVGRL. Positions 315-353 are disordered; that stretch reads EKLAGRGGPGSAGGAGFPREPSPPQAGPGGAKGTADFFL. A compositionally biased stretch (gly residues) spans 319–330; sequence GRGGPGSAGGAG.

The protein belongs to the bZIP family. Maf subfamily. As to quaternary structure, forms homodimers or heterodimers. Monomers and dimers are able to bind DNA, but the off-rate is faster for monomers. Interacts with NEUROD1 and PDX1. May interact with MAFB, FOS, JUN and PCAF. In terms of processing, ubiquitinated, leading to its degradation by the proteasome. Phosphorylated at tyrosines. As to expression, expressed in the islets of Langerhans (at protein level).

The protein resides in the nucleus. In terms of biological role, transcription factor that activates insulin gene expression. Acts synergistically with NEUROD1/BETA2 and PDX1. Binds the insulin enhancer C1/RIPE3b element. Binds to consensus TRE-type MARE 5'-TGCTGACTCAGCA-3' DNA sequence. This chain is Transcription factor MafA (MAFA), found in Homo sapiens (Human).